The following is an 85-amino-acid chain: Mitochondrial protein pet191 homolog (85 aa).

A CHCH domain is found at 18–61 (HSDCMFVKKKSARECLKNKDELPEECKNLIEAYGECKRQMLDMT). The Cx10C motif motif lies at 21–32 (CMFVKKKSAREC). Disulfide bonds link Cys-21–Cys-53 and Cys-32–Cys-43. A Cx9C motif motif is present at residues 43–53 (CKNLIEAYGEC). The interval 65 to 85 (RIAPEKNTDQDTEKPSNVDEQ) is disordered.

The protein belongs to the PET191 family.

The protein resides in the mitochondrion. Involved in the assembly of cytochrome c oxidase. In Schizosaccharomyces pombe (strain 972 / ATCC 24843) (Fission yeast), this protein is Mitochondrial protein pet191 homolog.